The sequence spans 146 residues: Putative type II restriction enzyme MjaORF1200P (146 aa).

It to A.pernix APE2001.

It catalyses the reaction Endonucleolytic cleavage of DNA to give specific double-stranded fragments with terminal 5'-phosphates.. A putative type II restriction enzyme, its methylase would be M.MjaORF1200P (AC Q58600). This Methanocaldococcus jannaschii (strain ATCC 43067 / DSM 2661 / JAL-1 / JCM 10045 / NBRC 100440) (Methanococcus jannaschii) protein is Putative type II restriction enzyme MjaORF1200P.